The sequence spans 154 residues: Xanthine-guanine phosphoribosyltransferase (154 aa).

Residues 37 to 38 (RG), arginine 69, and 88 to 96 (EDLVDSGDT) contribute to the 5-phospho-alpha-D-ribose 1-diphosphate site. A GMP-binding site is contributed by arginine 69. Aspartate 89 contributes to the Mg(2+) binding site. Residues aspartate 92 and isoleucine 135 each coordinate guanine. Aspartate 92 and isoleucine 135 together coordinate xanthine. Residues 92–96 (DSGDT) and 134–135 (WI) each bind GMP.

It belongs to the purine/pyrimidine phosphoribosyltransferase family. XGPT subfamily. Homotetramer. Mg(2+) serves as cofactor.

It is found in the cell inner membrane. It carries out the reaction GMP + diphosphate = guanine + 5-phospho-alpha-D-ribose 1-diphosphate. The catalysed reaction is XMP + diphosphate = xanthine + 5-phospho-alpha-D-ribose 1-diphosphate. It catalyses the reaction IMP + diphosphate = hypoxanthine + 5-phospho-alpha-D-ribose 1-diphosphate. It functions in the pathway purine metabolism; GMP biosynthesis via salvage pathway; GMP from guanine: step 1/1. Its pathway is purine metabolism; XMP biosynthesis via salvage pathway; XMP from xanthine: step 1/1. In terms of biological role, purine salvage pathway enzyme that catalyzes the transfer of the ribosyl-5-phosphate group from 5-phospho-alpha-D-ribose 1-diphosphate (PRPP) to the N9 position of the 6-oxopurines guanine and xanthine to form the corresponding ribonucleotides GMP (guanosine 5'-monophosphate) and XMP (xanthosine 5'-monophosphate), with the release of PPi. To a lesser extent, also acts on hypoxanthine. The protein is Xanthine-guanine phosphoribosyltransferase of Vibrio atlanticus (strain LGP32) (Vibrio splendidus (strain Mel32)).